A 206-amino-acid chain; its full sequence is Probable metallo-hydrolase MJ0888 (206 aa).

Positions 55, 57, 59, 60, 130, 147, and 190 each coordinate Zn(2+).

It belongs to the metallo-beta-lactamase superfamily. Requires Zn(2+) as cofactor.

The protein is Probable metallo-hydrolase MJ0888 of Methanocaldococcus jannaschii (strain ATCC 43067 / DSM 2661 / JAL-1 / JCM 10045 / NBRC 100440) (Methanococcus jannaschii).